The chain runs to 160 residues: Small ribosomal subunit protein bS6 (160 aa).

2 stretches are compositionally biased toward basic and acidic residues: residues 94–119 and 125–152; these read EEHE…RGGR and RGDR…REDA. Positions 94–160 are disordered; that stretch reads EEHEEGPSAM…DADTAAASEE (67 aa).

The protein belongs to the bacterial ribosomal protein bS6 family.

Binds together with bS18 to 16S ribosomal RNA. This Rhodopseudomonas palustris (strain BisB5) protein is Small ribosomal subunit protein bS6.